Reading from the N-terminus, the 245-residue chain is 1-(5-phosphoribosyl)-5-[(5-phosphoribosylamino)methylideneamino] imidazole-4-carboxamide isomerase (245 aa).

The Proton acceptor role is filled by Asp-7. Asp-129 serves as the catalytic Proton donor.

Belongs to the HisA/HisF family.

Its subcellular location is the cytoplasm. The catalysed reaction is 1-(5-phospho-beta-D-ribosyl)-5-[(5-phospho-beta-D-ribosylamino)methylideneamino]imidazole-4-carboxamide = 5-[(5-phospho-1-deoxy-D-ribulos-1-ylimino)methylamino]-1-(5-phospho-beta-D-ribosyl)imidazole-4-carboxamide. The protein operates within amino-acid biosynthesis; L-histidine biosynthesis; L-histidine from 5-phospho-alpha-D-ribose 1-diphosphate: step 4/9. The sequence is that of 1-(5-phosphoribosyl)-5-[(5-phosphoribosylamino)methylideneamino] imidazole-4-carboxamide isomerase from Shewanella baltica (strain OS223).